A 422-amino-acid chain; its full sequence is Nucleoprotein (422 aa).

Composition is skewed to polar residues over residues 1-12 (MSDNGPQSNQRS) and 22-31 (TDSTDNNQNG). Residues 1–52 (MSDNGPQSNQRSAPRITFGGPTDSTDNNQNGGRNGARPKQRRPQGLPNNTAS) form a disordered region. RNA-binding stretches follow at residues 42-187 (RPQG…SSRS) and 45-181 (GLPN…RGGS). Positions 49–176 (NTASWFTALT…TLPKGFYAEG (128 aa)) constitute a CoV N NTD domain. Residues arginine 93, arginine 108, and arginine 150 each contribute to the RNA site. Disordered regions lie at residues 167-214 (TLPK…MASG), 234-287 (KVSG…QGNF), and 362-422 (KTFP…STQA). Residue serine 177 is modified to Phosphoserine; by host. Residues 177-204 (SRGGSQASSRSSSRSRGNSRNSTPGSSR) form an SR region region. 2 stretches are compositionally biased toward low complexity: residues 180-207 (GSQASSRSSSRSRGNSRNSTPGSSRGNS) and 234-250 (KVSGKGQQQQGQTVTKK). The CoV N CTD domain maps to 248 to 365 (TKKSAAEASK…KHIDAYKTFP (118 aa)). Residues 257–265 (KKPRQKRTA) carry the Nuclear localization signal motif. Residues 259 to 362 (PRQKRTATKQ…LLNKHIDAYK (104 aa)) are dimerization. The segment covering 368 to 379 (EPKKDKKKKTDE) has biased composition (basic and acidic residues). Over residues 406–422 (RQLQNSMSGASADSTQA) the composition is skewed to polar residues.

It belongs to the betacoronavirus nucleocapsid protein family. In terms of assembly, homooligomer. Both monomeric and oligomeric forms interact with RNA. Interacts with protein M. Interacts with protein E. May bind to host HNRNPA1. Interacts with NSP3; this interaction serves to tether the genome to the newly translated replicase-transcriptase complex at a very early stage of infection. May interact with host SMAD3. Interacts with host PPIA/CYPA. Proteolytically cleaved by host CASP6. The cleavage leads to two fragments and facilitates viral replication by inhibiting host IFN signaling. The two fragments may interact with IRF3 inhibiting its nuclear translocation after activation and reduce the expression of IFNB and IFN-stimulated genes. In terms of processing, ADP-ribosylated. The ADP-ribosylation is retained in the virion during infection. Post-translationally, phosphorylated on serine and threonine residues. Phosphorylated by host GSK3A and GSK3B. Phosphorylation allows recruitment of host RNA helicase DDX1 which facilitates template readthrough and enables longer subgenomic mRNA synthesis. This promotes the solubility of homodimers that would otherwise aggregate. Host phosphatase would dephosphorylate the protein during assembly at M bound membranes.

The protein resides in the virion. Its subcellular location is the host endoplasmic reticulum-Golgi intermediate compartment. The protein localises to the host Golgi apparatus. It is found in the host cytoplasm. It localises to the host perinuclear region. The protein resides in the host nucleus. Packages the positive strand viral genome RNA into a helical ribonucleocapsid (RNP) and plays a fundamental role during virion assembly through its interactions with the viral genome and membrane protein M. Plays an important role in enhancing the efficiency of subgenomic viral RNA transcription as well as viral replication. May modulate transforming growth factor-beta signaling by binding host SMAD3. This is Nucleoprotein from Severe acute respiratory syndrome coronavirus (SARS-CoV).